The following is a 647-amino-acid chain: Acetyl-coenzyme A synthetase (647 aa).

CoA is bound by residues 189-192 (RGGK), T307, and N331. ATP is bound by residues 383 to 385 (GEP), 407 to 412 (DTWWQT), D496, and R511. S519 serves as a coordination point for CoA. R522 is an ATP binding site. The Mg(2+) site is built by H535 and V538. CoA is bound at residue R580. An N6-acetyllysine modification is found at K605.

It belongs to the ATP-dependent AMP-binding enzyme family. Mg(2+) serves as cofactor. Post-translationally, acetylated. Deacetylation by the SIR2-homolog deacetylase activates the enzyme.

It catalyses the reaction acetate + ATP + CoA = acetyl-CoA + AMP + diphosphate. Catalyzes the conversion of acetate into acetyl-CoA (AcCoA), an essential intermediate at the junction of anabolic and catabolic pathways. AcsA undergoes a two-step reaction. In the first half reaction, AcsA combines acetate with ATP to form acetyl-adenylate (AcAMP) intermediate. In the second half reaction, it can then transfer the acetyl group from AcAMP to the sulfhydryl group of CoA, forming the product AcCoA. The polypeptide is Acetyl-coenzyme A synthetase (Syntrophus aciditrophicus (strain SB)).